We begin with the raw amino-acid sequence, 545 residues long: Membrane protein insertase YidC (545 aa).

4 consecutive transmembrane segments (helical) span residues Ile350–Tyr370, Leu424–Val444, Ala461–Leu481, and Pro498–Ile518.

This sequence belongs to the OXA1/ALB3/YidC family. Type 1 subfamily. Interacts with the Sec translocase complex via SecD. Specifically interacts with transmembrane segments of nascent integral membrane proteins during membrane integration.

The protein resides in the cell inner membrane. Functionally, required for the insertion and/or proper folding and/or complex formation of integral membrane proteins into the membrane. Involved in integration of membrane proteins that insert both dependently and independently of the Sec translocase complex, as well as at least some lipoproteins. Aids folding of multispanning membrane proteins. This chain is Membrane protein insertase YidC, found in Neisseria meningitidis serogroup A / serotype 4A (strain DSM 15465 / Z2491).